The primary structure comprises 20 residues: Antimicrobial peptide AJN-10 (20 aa).

Its subcellular location is the secreted. In terms of biological role, displays antimicrobial activity against the Gram-negative bacterium A.hydrophila. In Anguilla japonica (Japanese eel), this protein is Antimicrobial peptide AJN-10.